A 289-amino-acid polypeptide reads, in one-letter code: S-methyl-5'-thioadenosine phosphorylase (289 aa).

Phosphate is bound by residues Ser-24, 66 to 67, and 99 to 100; these read RH and TA. Met-202 serves as a coordination point for substrate. Thr-203 lines the phosphate pocket. 226 to 228 serves as a coordination point for substrate; it reads DYD.

This sequence belongs to the PNP/MTAP phosphorylase family. MTAP subfamily. In terms of assembly, homotrimer.

Its subcellular location is the cytoplasm. The protein localises to the nucleus. It catalyses the reaction S-methyl-5'-thioadenosine + phosphate = 5-(methylsulfanyl)-alpha-D-ribose 1-phosphate + adenine. It functions in the pathway amino-acid biosynthesis; L-methionine biosynthesis via salvage pathway; S-methyl-5-thio-alpha-D-ribose 1-phosphate from S-methyl-5'-thioadenosine (phosphorylase route): step 1/1. Catalyzes the reversible phosphorylation of S-methyl-5'-thioadenosine (MTA) to adenine and 5-methylthioribose-1-phosphate. Involved in the breakdown of MTA, a major by-product of polyamine biosynthesis. Responsible for the first step in the methionine salvage pathway after MTA has been generated from S-adenosylmethionine. Has broad substrate specificity with 6-aminopurine nucleosides as preferred substrates. This Drosophila pseudoobscura pseudoobscura (Fruit fly) protein is S-methyl-5'-thioadenosine phosphorylase.